The sequence spans 333 residues: Photosystem II assembly lipoprotein Ycf48 (333 aa).

Positions 1-23 (MNRLLSSAVNLLLVLVLGVGLSG) are cleaved as a signal peptide. C24 is lipidated: N-palmitoyl cysteine. C24 carries the S-diacylglycerol cysteine lipid modification.

Belongs to the Ycf48 family. As to quaternary structure, part of early PSII assembly complexes which includes D1 (psbA) and PsbI; not found in mature PSII. Binds to the lumenal side of PSII complexes. Interacts with YidC.

The protein localises to the cellular thylakoid membrane. Functionally, a factor required for optimal assembly of photosystem II (PSII), acting in the early stages of PSII assembly. Also plays a role in replacement of photodamaged D1 (psbA). Assists YidC in synthesis of chlorophyll-binding proteins. This Synechococcus sp. (strain CC9902) protein is Photosystem II assembly lipoprotein Ycf48.